The following is a 426-amino-acid chain: 3-phosphoshikimate 1-carboxyvinyltransferase (426 aa).

3-phosphoshikimate-binding residues include K23, S24, and R28. K23 provides a ligand contact to phosphoenolpyruvate. 2 residues coordinate phosphoenolpyruvate: G96 and R124. 3-phosphoshikimate contacts are provided by T170, S171, Q172, S198, D314, and K341. Q172 serves as a coordination point for phosphoenolpyruvate. Catalysis depends on D314, which acts as the Proton acceptor. 3 residues coordinate phosphoenolpyruvate: R345, R386, and K411.

This sequence belongs to the EPSP synthase family. Monomer.

The protein resides in the cytoplasm. It carries out the reaction 3-phosphoshikimate + phosphoenolpyruvate = 5-O-(1-carboxyvinyl)-3-phosphoshikimate + phosphate. It participates in metabolic intermediate biosynthesis; chorismate biosynthesis; chorismate from D-erythrose 4-phosphate and phosphoenolpyruvate: step 6/7. Functionally, catalyzes the transfer of the enolpyruvyl moiety of phosphoenolpyruvate (PEP) to the 5-hydroxyl of shikimate-3-phosphate (S3P) to produce enolpyruvyl shikimate-3-phosphate and inorganic phosphate. This is 3-phosphoshikimate 1-carboxyvinyltransferase from Trichormus variabilis (strain ATCC 29413 / PCC 7937) (Anabaena variabilis).